The primary structure comprises 276 residues: Shikimate dehydrogenase (NADP(+)) (276 aa).

Shikimate-binding positions include 15–17 (SLS) and T62. K66 serves as the catalytic Proton acceptor. E78 is an NADP(+) binding site. Shikimate is bound by residues N87 and D102. Residues 151–156 (NRTVEK) and I218 contribute to the NADP(+) site. Y220 contributes to the shikimate binding site. NADP(+) is bound at residue G241.

Belongs to the shikimate dehydrogenase family. In terms of assembly, homodimer.

The catalysed reaction is shikimate + NADP(+) = 3-dehydroshikimate + NADPH + H(+). It participates in metabolic intermediate biosynthesis; chorismate biosynthesis; chorismate from D-erythrose 4-phosphate and phosphoenolpyruvate: step 4/7. Functionally, involved in the biosynthesis of the chorismate, which leads to the biosynthesis of aromatic amino acids. Catalyzes the reversible NADPH linked reduction of 3-dehydroshikimate (DHSA) to yield shikimate (SA). The chain is Shikimate dehydrogenase (NADP(+)) from Geobacillus kaustophilus (strain HTA426).